Reading from the N-terminus, the 895-residue chain is Endochitinase 2 (895 aa).

Positions 1–22 (MGLTNILAAFIAVSSLFIQSLA) are cleaved as a signal peptide. Residues 29 to 340 (SNLAVYWGQG…DIMKEVLLRC (312 aa)) enclose the GH18 domain. N90 carries N-linked (GlcNAc...) asparagine glycosylation. E175 acts as the Proton donor in catalysis. Residues 343 to 712 (DPPTSTVTST…APSSSTTEDR (370 aa)) form a disordered region. Positions 346 to 425 (TSTVTSTISA…ISTRSASTET (80 aa)) are enriched in low complexity. Polar residues predominate over residues 426 to 478 (VTTRSQEPPSTTISTRPASTETVTTRSQEPPSSTISTRSASTETVTTRSQEPP). Residues 479 to 505 (SSTISTRSASTETSTSSQDSPSTTIST) show a composition bias toward low complexity. Positions 506–543 (KSAPTGTVTTRSQDLPSTTISTRSPETETETVTTKSQD) are enriched in polar residues. Positions 544–555 (SPSITLSTRSSS) are enriched in low complexity. The segment covering 556-577 (AETVSTRSQHSSSTTISTKSAP) has biased composition (polar residues). Residues 578–589 (TETGTTSEHSTS) are compositionally biased toward low complexity. Residues 590–657 (MPVSTRSAST…ISTELPSQTH (68 aa)) are compositionally biased toward polar residues. Low complexity-rich tracts occupy residues 658–692 (STTDSTPVSSSPTIPSGSTTIIPGTASDPVSAPTT) and 699–712 (TLTLAPSSSTTEDR). G866 carries GPI-anchor amidated glycine lipidation. Positions 867–895 (GAMTVRSMDVVAKALITAGAAVLGLFLGL) are cleaved as a propeptide — removed in mature form.

Belongs to the glycosyl hydrolase 18 family. Chitinase class III subfamily.

It is found in the cell membrane. The enzyme catalyses Random endo-hydrolysis of N-acetyl-beta-D-glucosaminide (1-&gt;4)-beta-linkages in chitin and chitodextrins.. Its function is as follows. May be associated with endosporulation. This chain is Endochitinase 2 (CTS2), found in Coccidioides immitis (strain RS) (Valley fever fungus).